The sequence spans 105 residues: Cortistatin (105 aa).

An N-terminal signal peptide occupies residues 1–18 (MPLSPGLLLLLLSGATAT). Positions 19–74 (AALPLEGGPTGRDSEHMQEAAGIRKSSLLTFLAWWFEWTSQASAGPLIGEEAREVA) are excised as a propeptide. Residues cysteine 93 and cysteine 104 are joined by a disulfide bond.

This sequence belongs to the somatostatin family. Expressed in a subset of GABAergic cells in the cortex and hippocampus.

It is found in the secreted. Its function is as follows. Binds to all human somatostatin receptor (SSTR) subtypes. It also inhibits cAMP production induced by forskolin through SSTRs. The polypeptide is Cortistatin (CORT) (Homo sapiens (Human)).